Reading from the N-terminus, the 427-residue chain is Glutamate-1-semialdehyde 2,1-aminomutase (427 aa).

At lysine 265 the chain carries N6-(pyridoxal phosphate)lysine.

It belongs to the class-III pyridoxal-phosphate-dependent aminotransferase family. HemL subfamily. In terms of assembly, homodimer. Pyridoxal 5'-phosphate is required as a cofactor.

It is found in the cytoplasm. It carries out the reaction (S)-4-amino-5-oxopentanoate = 5-aminolevulinate. Its pathway is porphyrin-containing compound metabolism; protoporphyrin-IX biosynthesis; 5-aminolevulinate from L-glutamyl-tRNA(Glu): step 2/2. This is Glutamate-1-semialdehyde 2,1-aminomutase from Mannheimia succiniciproducens (strain KCTC 0769BP / MBEL55E).